Consider the following 863-residue polypeptide: DNA mismatch repair protein MutS (863 aa).

607–614 (GPNMAGKS) lines the ATP pocket.

This sequence belongs to the DNA mismatch repair MutS family.

Its function is as follows. This protein is involved in the repair of mismatches in DNA. It is possible that it carries out the mismatch recognition step. This protein has a weak ATPase activity. This is DNA mismatch repair protein MutS from Caldicellulosiruptor bescii (strain ATCC BAA-1888 / DSM 6725 / KCTC 15123 / Z-1320) (Anaerocellum thermophilum).